We begin with the raw amino-acid sequence, 666 residues long: Long chain acyl-CoA synthetase 5 (666 aa).

228–239 (IMYTSGTTGDPK) contacts ATP. The tract at residues 495–519 (DGWLHTGDVGEWQPNGSMKIIDRKK) is fatty acid-binding.

It belongs to the ATP-dependent AMP-binding enzyme family. It depends on Mg(2+) as a cofactor.

It catalyses the reaction a long-chain fatty acid + ATP + CoA = a long-chain fatty acyl-CoA + AMP + diphosphate. The protein operates within lipid metabolism; fatty acid metabolism. Functionally, activation of long-chain fatty acids for both synthesis of cellular lipids, and degradation via beta-oxidation. Preferentially uses palmitate, palmitoleate, oleate and linoleate. This is Long chain acyl-CoA synthetase 5 (LACS5) from Arabidopsis thaliana (Mouse-ear cress).